Reading from the N-terminus, the 200-residue chain is Small ribosomal subunit protein uS4 (200 aa).

The segment at 22–43 (TGKELQKRPYPPGQHGPSQRRK) is disordered. One can recognise an S4 RNA-binding domain in the interval 92-152 (SRLDNLVYRL…EKSRNLQVIK (61 aa)).

It belongs to the universal ribosomal protein uS4 family. Part of the 30S ribosomal subunit. Contacts protein S5. The interaction surface between S4 and S5 is involved in control of translational fidelity.

In terms of biological role, one of the primary rRNA binding proteins, it binds directly to 16S rRNA where it nucleates assembly of the body of the 30S subunit. Its function is as follows. With S5 and S12 plays an important role in translational accuracy. In Geobacillus sp. (strain WCH70), this protein is Small ribosomal subunit protein uS4.